The following is a 396-amino-acid chain: Beta-1,4-galactosyltransferase 3 (396 aa).

At 1-10 the chain is on the cytoplasmic side; sequence MLRRLLERPC. A helical; Signal-anchor for type II membrane protein membrane pass occupies residues 11–31; it reads TLALLVGSQLAVMMYLSLGGF. Topologically, residues 32–396 are lumenal; sequence RSLSALFGRE…ANHTAPHGSH (365 aa). Residue N57 is glycosylated (N-linked (GlcNAc...) asparagine). The cysteines at positions 80 and 122 are disulfide-linked. 133–137 serves as a coordination point for UDP-alpha-D-galactose; sequence PHRAR. N-linked (GlcNAc...) asparagine glycosylation is present at N169. UDP-alpha-D-galactose-binding positions include 172 to 174, 199 to 200, Y229, and W261; these read FNR and VD. A disulfide bridge connects residues C193 and C212. Residue D200 coordinates Mn(2+). Residue 263-266 coordinates N-acetyl-D-glucosamine; it reads GEDD. A Mn(2+)-binding site is contributed by H294. 294 to 296 provides a ligand contact to UDP-alpha-D-galactose; that stretch reads HRG. R306 contacts N-acetyl-D-glucosamine. The N-linked (GlcNAc...) asparagine glycan is linked to N340. The interval 341–396 is disordered; it reads ITADIGTDPRGPRTSSGPHYPPGSSQAFRQEMLQRRPPARPGPLPTANHTAPHGSH. Positions 353-368 are enriched in polar residues; it reads RTSSGPHYPPGSSQAF. An N-linked (GlcNAc...) asparagine glycan is attached at N388.

Belongs to the glycosyltransferase 7 family. Requires Mn(2+) as cofactor.

The protein resides in the golgi apparatus. It is found in the golgi stack membrane. It catalyses the reaction an N-acetyl-beta-D-glucosaminyl derivative + UDP-alpha-D-galactose = a beta-D-galactosyl-(1-&gt;4)-N-acetyl-beta-D-glucosaminyl derivative + UDP + H(+). It carries out the reaction N-acetyl-D-glucosamine + UDP-alpha-D-galactose = beta-D-galactosyl-(1-&gt;4)-N-acetyl-D-glucosamine + UDP + H(+). The enzyme catalyses a beta-D-GlcNAc-(1-&gt;3)-beta-D-Gal-(1-&gt;4)-beta-D-Glc-(1&lt;-&gt;1)-Cer(d18:1(4E)) + UDP-alpha-D-galactose = a neolactoside nLc4Cer(d18:1(4E)) + UDP + H(+). The catalysed reaction is a beta-D-glucosylceramide + UDP-alpha-D-galactose = a beta-D-galactosyl-(1-&gt;4)-beta-D-glucosyl-(1&lt;-&gt;1)-ceramide + UDP + H(+). It catalyses the reaction a neolactoside IV(3)-beta-GlcNAc-nLc4Cer + UDP-alpha-D-galactose = a neolactoside nLc6Cer + UDP + H(+). It participates in protein modification; protein glycosylation. In terms of biological role, responsible for the synthesis of complex-type N-linked oligosaccharides in many glycoproteins as well as the carbohydrate moieties of glycolipids. The chain is Beta-1,4-galactosyltransferase 3 (B4GALT3) from Bos taurus (Bovine).